The primary structure comprises 223 residues: Fibroblast growth factor-binding protein 2 (223 aa).

Positions 1-19 are cleaved as a signal peptide; sequence MKFVPCLLLVTLSCLGTLG. A disordered region spans residues 23-45; that stretch reads RQKQGSTGEEFHFQTGGRDSCTM. 3 disulfide bridges follow: Cys-43–Cys-63, Cys-72–Cys-106, and Cys-81–Cys-117. The segment at 120-201 is disordered; that stretch reads AGPQAHMQQV…PGGNEEAKKK (82 aa). Residues 125–144 show a composition bias toward polar residues; the sequence is HMQQVTSSLKGSPEPNQQPE. A compositionally biased stretch (low complexity) spans 175-186; that stretch reads AKPTTRPTAKPT. Cys-206 and Cys-214 form a disulfide bridge.

It belongs to the fibroblast growth factor-binding protein family. Expressed in serum, peripheral leukocytes and cytotoxic T-lymphocytes, but not in granulocytes and monocytes (at protein level).

The protein localises to the secreted. The protein resides in the extracellular space. The chain is Fibroblast growth factor-binding protein 2 (FGFBP2) from Homo sapiens (Human).